Here is a 445-residue protein sequence, read N- to C-terminus: Deoxyribodipyrimidine photo-lyase (445 aa).

Residues 20–148 enclose the Photolyase/cryptochrome alpha/beta domain; sequence SYVVYWMQAS…QVESNVIVPV (129 aa). Arg-239 lines the DNA pocket.

This sequence belongs to the DNA photolyase class-2 family. FAD serves as cofactor. The cofactor is coenzyme F420-(gamma-Glu)n.

It catalyses the reaction cyclobutadipyrimidine (in DNA) = 2 pyrimidine residues (in DNA).. Involved in repair of UV radiation-induced DNA damage. Catalyzes the light-dependent monomerization (300-600 nm) of cyclobutyl pyrimidine dimers (in cis-syn configuration), which are formed between adjacent bases on the same DNA strand upon exposure to ultraviolet radiation. This chain is Deoxyribodipyrimidine photo-lyase (phr), found in Methanothermobacter thermautotrophicus (strain ATCC 29096 / DSM 1053 / JCM 10044 / NBRC 100330 / Delta H) (Methanobacterium thermoautotrophicum).